A 295-amino-acid polypeptide reads, in one-letter code: Ribosomal protein L11 methyltransferase (295 aa).

S-adenosyl-L-methionine is bound by residues threonine 146, glycine 167, aspartate 189, and asparagine 231.

This sequence belongs to the methyltransferase superfamily. PrmA family.

Its subcellular location is the cytoplasm. The catalysed reaction is L-lysyl-[protein] + 3 S-adenosyl-L-methionine = N(6),N(6),N(6)-trimethyl-L-lysyl-[protein] + 3 S-adenosyl-L-homocysteine + 3 H(+). In terms of biological role, methylates ribosomal protein L11. This Vibrio campbellii (strain ATCC BAA-1116) protein is Ribosomal protein L11 methyltransferase.